Here is a 434-residue protein sequence, read N- to C-terminus: Enolase (434 aa).

Gln163 serves as a coordination point for (2R)-2-phosphoglycerate. Glu205 (proton donor) is an active-site residue. 3 residues coordinate Mg(2+): Asp242, Glu291, and Asp318. Positions 343, 372, 373, and 394 each coordinate (2R)-2-phosphoglycerate. The active-site Proton acceptor is the Lys343.

This sequence belongs to the enolase family. Mg(2+) serves as cofactor.

The protein resides in the cytoplasm. It is found in the secreted. Its subcellular location is the cell surface. The catalysed reaction is (2R)-2-phosphoglycerate = phosphoenolpyruvate + H2O. It participates in carbohydrate degradation; glycolysis; pyruvate from D-glyceraldehyde 3-phosphate: step 4/5. In terms of biological role, catalyzes the reversible conversion of 2-phosphoglycerate (2-PG) into phosphoenolpyruvate (PEP). It is essential for the degradation of carbohydrates via glycolysis. The sequence is that of Enolase from Streptococcus intermedius.